We begin with the raw amino-acid sequence, 187 residues long: Probable nicotinate-nucleotide adenylyltransferase (187 aa).

The protein belongs to the NadD family.

It catalyses the reaction nicotinate beta-D-ribonucleotide + ATP + H(+) = deamido-NAD(+) + diphosphate. The protein operates within cofactor biosynthesis; NAD(+) biosynthesis; deamido-NAD(+) from nicotinate D-ribonucleotide: step 1/1. Its function is as follows. Catalyzes the reversible adenylation of nicotinate mononucleotide (NaMN) to nicotinic acid adenine dinucleotide (NaAD). This is Probable nicotinate-nucleotide adenylyltransferase from Anaeromyxobacter sp. (strain K).